Consider the following 581-residue polypeptide: Sodium/hydrogen exchanger 8 (581 aa).

The next 11 helical transmembrane spans lie at Met-60–Ile-80, Leu-84–Ile-104, Pro-123–His-143, Leu-156–Leu-176, Phe-191–Ala-211, Phe-264–Leu-284, Gly-311–Met-331, Val-354–Pro-374, Ile-379–Pro-399, Met-417–Leu-437, and Thr-451–Ile-471. Thr-510 bears the Phosphothreonine mark. 2 positions are modified to phosphoserine: Ser-571 and Ser-573.

This sequence belongs to the monovalent cation:proton antiporter 1 (CPA1) transporter (TC 2.A.36) family. Ubiquitous. Strongly expressed in skeletal muscle and kidney. Detected throughout the entire gastrointestinal tract, with high expression detected in stomach, duodenum and ascending colon.

The protein localises to the golgi apparatus membrane. The protein resides in the golgi apparatus. It localises to the trans-Golgi network membrane. Its subcellular location is the endosome. It is found in the multivesicular body membrane. The protein localises to the apical cell membrane. The protein resides in the cytoplasmic vesicle. It localises to the secretory vesicle. Its subcellular location is the acrosome. It carries out the reaction Na(+)(in) + H(+)(out) = Na(+)(out) + H(+)(in). HOE642 inhibits SLC9A8 activity. In terms of biological role, na(+)/H(+) antiporter. Mediates the electoneutral exchange of intracellular H(+) ions for extracellular Na(+) in 1:1 stoichiometry. Acts as an Na(+)/H(+) exchanger in the trans-Golgi. Contributes to the regulation of pH regulation of Golgi apparatus, and consequently, in protein trafficking and endosomal morphology. In germ cells, plays a crucial role in acrosome biogenesis and sperm development, probably by playing a role in the fusion of the Golgi-derived vesicles that form the acrosomal cap. Can also be active at the cell surface of specialized cells. In the small intestine, at the cell membrane, plays a major physiological role in transepithelial absorption of Na(+) and regulates intracellular pH homeostasis of intestinal epithelial cells. Acts as an important regulator of mucosal integrity in the intestine and in the stomach, could mediate the pH fluctuation necessary for mucin exocytosis or assist membrane trafficking of other proteins. Plays a role in photoreceptor survival and in the maintenance of intracellular pH homeostasis in retinal pigment epithelium (RPE cells). The chain is Sodium/hydrogen exchanger 8 from Homo sapiens (Human).